The following is an 800-amino-acid chain: Small ribosomal subunit protein uS3c (800 aa).

The tract at residues 1–118 (MGQKVHPSGF…LQVKKDILVK (118 aa)) is S3-like 1st part. The interval 119-664 (LQKTRQYLTN…FLDCKFEELE (546 aa)) is intervening sequence (IVS). The S3-like 2nd part stretch occupies residues 665–800 (RRKTMWVQNL…TKLVTESTGA (136 aa)).

It belongs to the universal ribosomal protein uS3 family. As to quaternary structure, part of the 30S ribosomal subunit.

It localises to the plastid. It is found in the chloroplast. This Chlamydomonas moewusii (Chlamydomonas eugametos) protein is Small ribosomal subunit protein uS3c (rps3).